The chain runs to 193 residues: dCTP deaminase, dUMP-forming (193 aa).

Residues 101-106, Asp-119, 127-129, Gln-148, Tyr-162, and Gln-174 each bind dCTP; these read KSSLGR and TLE. Catalysis depends on Glu-129, which acts as the Proton donor/acceptor. Positions 162–184 are disordered; sequence YGSKGTGSHYQGQRGPTPSRSYE. Positions 167-183 are enriched in polar residues; the sequence is TGSHYQGQRGPTPSRSY.

This sequence belongs to the dCTP deaminase family. In terms of assembly, homotrimer.

It catalyses the reaction dCTP + 2 H2O = dUMP + NH4(+) + diphosphate. It functions in the pathway pyrimidine metabolism; dUMP biosynthesis; dUMP from dCTP: step 1/1. Its function is as follows. Bifunctional enzyme that catalyzes both the deamination of dCTP to dUTP and the hydrolysis of dUTP to dUMP without releasing the toxic dUTP intermediate. The protein is dCTP deaminase, dUMP-forming of Bifidobacterium longum (strain DJO10A).